The sequence spans 494 residues: MGSASKEYEFLSEIGLSSSHNLGNYVGGKWLGNGPLVSTLNPANNQVLPIAQVVEASLEDYEIGLKACEEAAKTWMQVPAPKRGDIVRQIGDALRSKLDYLGRLLSLEMGKILAEGIGEVQEVIDMCDFAVGLSRQLNGSVIPSERPNHMMLEMWNPLGIVGVITAFNFPCAVLGWNACIALVCGNCVVWKGAPTTPLITIAMTKLVAEVLEKNHLPGAIFTAMCGGAEIGEAIAKDTRIPLVSFTGSSKVGLTVQQTVSARSGKTLLELSGNNAIIVMDDADIQLAARSVLFAAVGTAGQRCTTCRRLLLHESVYDKVLEQLLTSYKQVKIGDPLEKGTLLGPLHTPESKKNFEKGIEVIKSQGGKVLTGGKAVEGEGNFVEPTIIEISSDAAVVKEELFAPVLYALKFKTFEEAVAINNSVPQGLSSSIFTRSPDNIFKWIGPMGSDCGIVNVNIPTNGAEIGGAFGGEKATGGGREAGSDSWKQYMRRSTW.

247 to 252 lines the NAD(+) pocket; it reads GSSKVG. Catalysis depends on Glu269, which acts as the Proton acceptor. The Nucleophile role is filled by Cys303.

Belongs to the aldehyde dehydrogenase family. As to quaternary structure, homotetramer.

The enzyme catalyses an aldehyde + NAD(+) + H2O = a carboxylate + NADH + 2 H(+). The chain is Aldehyde dehydrogenase family 7 member A1 (BTG-26) from Brassica napus (Rape).